Here is a 250-residue protein sequence, read N- to C-terminus: 3-deoxy-manno-octulosonate cytidylyltransferase (250 aa).

The protein belongs to the KdsB family.

The protein resides in the cytoplasm. It carries out the reaction 3-deoxy-alpha-D-manno-oct-2-ulosonate + CTP = CMP-3-deoxy-beta-D-manno-octulosonate + diphosphate. It participates in nucleotide-sugar biosynthesis; CMP-3-deoxy-D-manno-octulosonate biosynthesis; CMP-3-deoxy-D-manno-octulosonate from 3-deoxy-D-manno-octulosonate and CTP: step 1/1. The protein operates within bacterial outer membrane biogenesis; lipopolysaccharide biosynthesis. Functionally, activates KDO (a required 8-carbon sugar) for incorporation into bacterial lipopolysaccharide in Gram-negative bacteria. This Legionella pneumophila subsp. pneumophila (strain Philadelphia 1 / ATCC 33152 / DSM 7513) protein is 3-deoxy-manno-octulosonate cytidylyltransferase.